We begin with the raw amino-acid sequence, 455 residues long: MGACLGACSLLSCASCLCGSAPCILCSCCPASRNSTVSRLIFTFFLFLGVLVSIIMLSPGVESQLYKLPWVCEEGAGIPTVLQGHIDCGSLLGYRAVYRMCFATAAFFFFFTLLMLCVSSSRDPRAAIQNGFWFFKFLILVGLTVGAFYIPDGSFTNIWFYFGVVGSFLFILIQLVLLIDFAHSWNQRWLGKAEECDSRAWYAGLFFFTLLFYLLSIAAVALMFMYYTEPSGCHEGKVFISLNLTFCVCVSIAAVLPKVQDAQPNSGLLQASVITLYTMFVTWSALSSIPEQKCNPHLPTQLGNETVVAGPEGYETQWWDAPSIVGLIIFLLCTLFISLRSSDHRQVNSLMQTEECPPMLDATQQQQQVAACEGRAFDNEQDGVTYSYSFFHFCLVLASLHVMMTLTNWYKPGETRKMISTWTAVWVKICASWAGLLLYLWTLVAPLLLRNRDFS.

The next 11 helical transmembrane spans lie at 5-27 (LGAC…ILCS), 40-57 (LIFT…IIML), 96-118 (AVYR…MLCV), 131-150 (GFWF…AFYI), 160-182 (FYFG…IDFA), 202-224 (YAGL…ALMF), 239-256 (FISL…AAVL), 268-290 (LLQA…SSIP), 317-339 (QWWD…FISL), 385-407 (TYSY…MTLT), and 422-444 (WTAV…WTLV).

The protein belongs to the TDE1 family.

The protein localises to the cell membrane. It catalyses the reaction a 1,2-diacyl-sn-glycero-3-phospho-L-serine(in) = a 1,2-diacyl-sn-glycero-3-phospho-L-serine(out). The enzyme catalyses a 1,2-diacyl-sn-glycero-3-phosphocholine(in) = a 1,2-diacyl-sn-glycero-3-phosphocholine(out). It carries out the reaction a 1,2-diacyl-sn-glycero-3-phosphoethanolamine(in) = a 1,2-diacyl-sn-glycero-3-phosphoethanolamine(out). Its function is as follows. Non-ATP-dependent, non-specific lipid transporter for phosphatidylserine, phosphatidylcholine, and phosphatidylethanolamine. Functions as a scramblase that flips lipids in both directions across the membrane. In contrast to SERINC3 and SERINC5, has no effect on HIV-1 particles infectivity. This Homo sapiens (Human) protein is Serine incorporator 2.